Reading from the N-terminus, the 511-residue chain is Maturase K (511 aa).

It belongs to the intron maturase 2 family. MatK subfamily.

It localises to the plastid. The protein localises to the chloroplast. In terms of biological role, usually encoded in the trnK tRNA gene intron. Probably assists in splicing its own and other chloroplast group II introns. The chain is Maturase K from Nandina domestica (Heavenly bamboo).